The sequence spans 409 residues: Salivary endonuclease (409 aa).

A signal peptide spans 1 to 20; sequence MHLQLNLCAILLSVLNGIQG. N-linked (GlcNAc...) asparagine glycosylation is found at N37 and N102. H216 (proton acceptor) is an active-site residue. N246 provides a ligand contact to Mg(2+). N-linked (GlcNAc...) asparagine glycans are attached at residues N351 and N381.

It belongs to the DNA/RNA non-specific endonuclease family. Requires Mg(2+) as cofactor. In terms of tissue distribution, salivary gland.

Its subcellular location is the secreted. Its function is as follows. Hydrolyzes single-stranded and double-stranded DNA with little sequence specificity. Inhibits contact pathway of blood coagulation in the host by preventing activation of coagulation factor XII (F12) triggered by soluble DNA. Modestly up-regulates expression of CSF2, CXCL1 and CXCL8 in cultured human dermal microvascular endothelial cells. At higher doses promotes host neutrophil recruitment at the injection site in mouse model. (Microbial infection) Increases Leishmania major survival in the host by disrupting parasite-induced neutrophil extracellular traps. Exacerbates L.major parasite infectivity and increases cutaneous lesions in mouse model. This chain is Salivary endonuclease, found in Lutzomyia longipalpis (Sand fly).